Reading from the N-terminus, the 311-residue chain is 4-hydroxyproline 2-epimerase (311 aa).

Cys-88 acts as the Proton acceptor in catalysis. Residues 89–90 (GH), His-208, and Asp-232 contribute to the substrate site. The Proton donor role is filled by Cys-236. 237 to 238 (GT) is a substrate binding site.

The protein belongs to the proline racemase family.

The enzyme catalyses trans-4-hydroxy-L-proline = cis-4-hydroxy-D-proline. In terms of biological role, catalyzes the epimerization of trans-4-hydroxy-L-proline (t4LHyp) to cis-4-hydroxy-D-proline (c4DHyp). Is likely involved in a degradation pathway that converts t4LHyp to alpha-ketoglutarate. Displays no proline racemase activity. The polypeptide is 4-hydroxyproline 2-epimerase (Chromohalobacter salexigens (strain ATCC BAA-138 / DSM 3043 / CIP 106854 / NCIMB 13768 / 1H11)).